The following is a 212-amino-acid chain: Stem bromelain (212 aa).

2 disulfide bridges follow: C23-C63 and C57-C96. Residue C26 is part of the active site. Residue N117 is glycosylated (N-linked (GlcNAc...) asparagine). C152 and C199 are oxidised to a cystine. The active site involves H158.

Belongs to the peptidase C1 family.

It carries out the reaction Broad specificity for cleavage of proteins, but strong preference for Z-Arg-Arg-|-NHMec among small molecule substrates.. Functionally, cysteine proteinase with a high level of diversity in substrate specificity. This is Stem bromelain from Ananas comosus (Pineapple).